The following is a 363-amino-acid chain: Isopentenyl-diphosphate delta-isomerase (363 aa).

Position 7–8 (Arg-7–Lys-8) interacts with substrate. FMN contacts are provided by residues Ala-71–Thr-73, Ser-101, and Asn-130. Position 160 (Gln-160) interacts with substrate. Position 161 (Glu-161) interacts with Mg(2+). FMN contacts are provided by residues Lys-192, Ser-217, Thr-222, Gly-270–Arg-272, and Ala-291–Gly-292.

This sequence belongs to the IPP isomerase type 2 family. In terms of assembly, homooctamer. Dimer of tetramers. Requires FMN as cofactor. It depends on NADPH as a cofactor. The cofactor is Mg(2+).

The protein resides in the cytoplasm. It catalyses the reaction isopentenyl diphosphate = dimethylallyl diphosphate. Involved in the biosynthesis of isoprenoids. Catalyzes the 1,3-allylic rearrangement of the homoallylic substrate isopentenyl (IPP) to its allylic isomer, dimethylallyl diphosphate (DMAPP). This chain is Isopentenyl-diphosphate delta-isomerase, found in Symbiobacterium thermophilum (strain DSM 24528 / JCM 14929 / IAM 14863 / T).